The following is a 452-amino-acid chain: Phosphoglucosamine mutase (452 aa).

Residue S103 is the Phosphoserine intermediate of the active site. S103, D244, D246, and D248 together coordinate Mg(2+). S103 is modified (phosphoserine).

It belongs to the phosphohexose mutase family. The cofactor is Mg(2+). In terms of processing, activated by phosphorylation.

It catalyses the reaction alpha-D-glucosamine 1-phosphate = D-glucosamine 6-phosphate. Functionally, catalyzes the conversion of glucosamine-6-phosphate to glucosamine-1-phosphate. The protein is Phosphoglucosamine mutase of Fusobacterium nucleatum subsp. nucleatum (strain ATCC 25586 / DSM 15643 / BCRC 10681 / CIP 101130 / JCM 8532 / KCTC 2640 / LMG 13131 / VPI 4355).